The chain runs to 620 residues: MSPPSPGRRREQRRPRAAATMATPLPGRAGGPATPLSPTRLSRLQEKEELRELNDRLAHYIDRVRALELENDRLLLKISEKEEVTTREVSGIKALYESELADARRVLDETARERARLQIEIGKLRAELDEVNKSAKKREGELTVAQGRVKDLESLFHRSEVELAAALSDKRGLESDVAELRAQLAKAEDGHAVAKKQLEKETLMRVDLENRCQSLQEELDFRKSVFEEEVRETRRRHERRLVEVDSSRQQEYDFKMAQALEELRSQHDEQVRLYKLELEQTYQAKLDSAKLSSDQNDKAASAAREELKEARMRLESLSYQLSGLQKQASAAEDRIRELEEAMAGERDKFRKMLDAKEQEMTEMRDVMQQQLAEYQELLDVKLALDMEINAYRKLLEGEEERLKLSPSPSSRVTVSRATSSSSGSLSATGRLGRSKRKRLEVEEPLGSGPSVLGTGTGGSGGFHLAQQASASGSVSIEEIDLEGKFVQLKNNSDKDQSLGNWRIKRQVLEGEEIAYKFTPKYILRAGQMVTVWAAGAGVAHSPPSTLVWKGQSSWGTGESFRTVLVNADGEEVAMRTVKKSSVMRENENGEEEEEEAEFGEEDLFHQQGDPRTTSRGCYVM.

The tract at residues 1-38 (MSPPSPGRRREQRRPRAAATMATPLPGRAGGPATPLSP) is disordered. The tract at residues 1–48 (MSPPSPGRRREQRRPRAAATMATPLPGRAGGPATPLSPTRLSRLQEKE) is head. T23 and T34 each carry phosphothreonine. S37 carries the post-translational modification Phosphoserine. The region spanning 46–402 (EKEELRELND…KLLEGEEERL (357 aa)) is the IF rod domain. The coil 1A stretch occupies residues 49–83 (ELRELNDRLAHYIDRVRALELENDRLLLKISEKEE). K77 participates in a covalent cross-link: Glycyl lysine isopeptide (Lys-Gly) (interchain with G-Cter in SUMO2). Position 81 is an N6-acetyllysine; alternate (K81). K81 participates in a covalent cross-link: Glycyl lysine isopeptide (Lys-Gly) (interchain with G-Cter in SUMO2); alternate. A linker 1 region spans residues 84–95 (VTTREVSGIKAL). A coil 1B region spans residues 96-229 (YESELADARR…DFRKSVFEEE (134 aa)). Glycyl lysine isopeptide (Lys-Gly) (interchain with G-Cter in SUMO2) cross-links involve residues K195 and K255. The tract at residues 230–256 (VRETRRRHERRLVEVDSSRQQEYDFKM) is linker 2. Residues 257-400 (AQALEELRSQ…YRKLLEGEEE (144 aa)) are coil 2. Residues S316 and S407 each carry the phosphoserine modification. The interval 399 to 464 (EERLKLSPSP…GTGGSGGFHL (66 aa)) is disordered. The interval 401 to 620 (RLKLSPSPSS…RTTSRGCYVM (220 aa)) is tail. Residues 404-431 (LSPSPSSRVTVSRATSSSSGSLSATGRL) show a composition bias toward low complexity. T413 is a glycosylation site (O-linked (GlcNAc) threonine). A phosphoserine mark is found at S420, S422, S424, and S426. An Omega-N-methylarginine modification is found at R433. A Nuclear localization signal motif is present at residues 435–440 (KRKRLE). The segment covering 444-453 (PLGSGPSVLG) has biased composition (low complexity). The 118-residue stretch at 462–579 (FHLAQQASAS…EEVAMRTVKK (118 aa)) folds into the LTD domain. K489 is covalently cross-linked (Glycyl lysine isopeptide (Lys-Gly) (interchain with G-Cter in SUMO2)). Residue S497 is modified to Phosphoserine. The interval 581-620 (SVMRENENGEEEEEEAEFGEEDLFHQQGDPRTTSRGCYVM) is disordered. The segment covering 588–601 (NGEEEEEEAEFGEE) has biased composition (acidic residues). The span at 609–620 (DPRTTSRGCYVM) shows a compositional bias: polar residues. C617 carries the post-translational modification Cysteine methyl ester. C617 is lipidated: S-farnesyl cysteine. Positions 618 to 620 (YVM) are cleaved as a propeptide — removed in mature form.

Belongs to the intermediate filament family. In terms of assembly, dimer. Lamin dimers then assemble into dimeric head-to-tail polymers. Ultimately, two head-to-tail polymers assemble laterally into a protofilament with a uniformly shaped rod of 3.5 nm in diameter. Interacts with TMEM43. Post-translationally, B-type lamins undergo a series of modifications, such as farnesylation and phosphorylation. Increased phosphorylation of the lamins occurs before envelope disintegration and probably plays a role in regulating lamin associations. In terms of processing, phosphorylation plays a key role in lamin organization, subcellular localization and nuclear envelope disintegration. Phosphorylation by CDK1 at Ser-37 and Ser-407 at the onset of mitosis drives lamin disassembly and nuclear envelope breakdown.

The protein localises to the nucleus lamina. Its function is as follows. Lamins are intermediate filament proteins that assemble into a filamentous meshwork, and which constitute the major components of the nuclear lamina, a fibrous layer on the nucleoplasmic side of the inner nuclear membrane. Lamins provide a framework for the nuclear envelope, bridging the nuclear envelope and chromatin, thereby playing an important role in nuclear assembly, chromatin organization, nuclear membrane and telomere dynamics. The structural integrity of the lamina is strictly controlled by the cell cycle, as seen by the disintegration and formation of the nuclear envelope in prophase and telophase, respectively. This chain is Lamin-B2 (LMNB2), found in Homo sapiens (Human).